The sequence spans 88 residues: Small ribosomal subunit protein bS20 (88 aa).

A disordered region spans residues 1 to 20 (MANTAQARKRARQAVVQNAH).

It belongs to the bacterial ribosomal protein bS20 family.

In terms of biological role, binds directly to 16S ribosomal RNA. The protein is Small ribosomal subunit protein bS20 of Ralstonia pickettii (strain 12J).